The following is an 815-amino-acid chain: Cell division control protein 48 homolog D (815 aa).

Alanine 2 is modified (N-acetylalanine). Phosphoserine is present on serine 42. Residues 249 to 256 (GPPGSGKT) and 522 to 529 (GPPGCGKT) contribute to the ATP site. Serine 720 carries the phosphoserine modification. The tract at residues 772–815 (GSEFRFPDAPTGTTGAFPGAAATVGGVDPFATSGGAADDDDLYS) is disordered. The span at 780 to 798 (APTGTTGAFPGAAATVGGV) shows a compositional bias: low complexity.

Belongs to the AAA ATPase family.

Its subcellular location is the nucleus. It localises to the cytoplasm. The protein resides in the cytoskeleton. The protein localises to the phragmoplast. Probably functions in cell division and growth processes. Interacts with certain SNAREs as part of specialized membrane fusion events where vesicles from the same organelle fuse (homotypic fusion). In Arabidopsis thaliana (Mouse-ear cress), this protein is Cell division control protein 48 homolog D (CDC48D).